The primary structure comprises 506 residues: Epstein-Barr nuclear antigen leader protein (506 aa).

The disordered stretch occupies residues 1 to 471 (MGDRSEVPGP…PLRPRPQPPA (471 aa)). Ser35 is modified (phosphoserine; by host).

This sequence belongs to the lymphocryptovirus EBNA-LP family. In terms of assembly, homooligomer. Interacts with host SP100; this interaction is important for EBNA-LP coactivator activity. Interacts with host HAX1, ERR1 and HSPA2. Interacts with host PRKDC and AKAP8L; these interactions modulate the coactivator function of EBNA-LP. Post-translationally, phosphorylated by the cellular protein kinase cdc2.

It localises to the host nucleus. Functionally, plays an important role in the establishment of B-cell immortalization by acting as an EBNA2 coactivator. This transcriptional activation preferentially enhances the expression of the major viral protein LMP1. The interaction between EBNA-LP and host SP100 correlates with coactivation of EBNA2 and the relocalization of SP100 from PML nuclear bodies into nucleoplasm. The sequence is that of Epstein-Barr nuclear antigen leader protein (EBNA-LP) from Epstein-Barr virus (strain AG876) (HHV-4).